The sequence spans 338 residues: Nucleoid-associated protein HI_0839 (338 aa).

This sequence belongs to the YejK family.

It localises to the cytoplasm. Its subcellular location is the nucleoid. In Haemophilus influenzae (strain ATCC 51907 / DSM 11121 / KW20 / Rd), this protein is Nucleoid-associated protein HI_0839.